Reading from the N-terminus, the 364-residue chain is Rhomboid domain-containing protein 2 (364 aa).

The next 5 helical transmembrane spans lie at 11–31, 63–83, 100–120, 158–178, and 184–204; these read WCLCPEVPSATFFTALLSLLV, LVTYIFVYENPISLLCGAIII, CFFTVIFAIFSAIIFLSFEAV, FGMVVPSVLVPWLLLGASWLI, and LSNVCGLSIGLAYGLTYCYSI. 2 disordered regions span residues 242-282 and 317-364; these read AQSR…KLAS and SSVY…VPMP. Composition is skewed to polar residues over residues 267–276 and 317–329; these read HPVSQTQHAS and SSVYPASAGTSLG.

The protein belongs to the peptidase S54 family.

It is found in the golgi apparatus. It localises to the cis-Golgi network membrane. This chain is Rhomboid domain-containing protein 2 (RHBDD2), found in Homo sapiens (Human).